A 492-amino-acid polypeptide reads, in one-letter code: Probable cytochrome P450 313a1 (492 aa).

C438 is a binding site for heme.

The protein belongs to the cytochrome P450 family. Heme is required as a cofactor.

The protein localises to the endoplasmic reticulum membrane. The protein resides in the microsome membrane. Functionally, may be involved in the metabolism of insect hormones and in the breakdown of synthetic insecticides. This is Probable cytochrome P450 313a1 (Cyp313a1) from Drosophila melanogaster (Fruit fly).